A 2718-amino-acid chain; its full sequence is Zinc finger protein 40 (2718 aa).

Disordered regions lie at residues 58–182 (HLKK…CISS), 210–256 (LSQK…AESQ), and 335–373 (GLTS…PMPI). Residue Ser141 is modified to Phosphoserine. Over residues 142–158 (ELRRWRSEGADPAKFSD) the composition is skewed to basic and acidic residues. Composition is skewed to polar residues over residues 164 to 182 (DSSS…CISS) and 237 to 256 (KNSS…AESQ). Residues 406-428 (YICEYCNRACAKPSVLLKHIRSH) form a C2H2-type 1 zinc finger. Thr429 carries the phosphothreonine modification. The C2H2-type 2 zinc-finger motif lies at 434-456 (YPCVTCGFSFKTKSNLYKHKKSH). Phosphoserine is present on residues Ser476, Ser479, Ser492, Ser495, Ser571, and Ser577. The segment at 484-511 (SIHSDVEDSGESEEEGATDERQHDLGAM) is disordered. Acidic residues predominate over residues 490 to 500 (EDSGESEEEGA). The disordered stretch occupies residues 574-727 (RTDSPKAMDP…TPSALPTGEK (154 aa)). Residues 576–585 (DSPKAMDPKP) show a composition bias toward basic and acidic residues. Positions 588–612 (SSAQKQKDLQVTNVQPLSANMSQGG) are enriched in polar residues. Residues 617 to 626 (ETNENSHQKG) are compositionally biased toward basic and acidic residues. Polar residues-rich tracts occupy residues 644 to 687 (AQLQ…QTVS) and 698 to 721 (STEQ…TPSA). A phosphoserine mark is found at Ser670 and Ser681. The CCHC HIVEP-type zinc-finger motif lies at 956 to 986 (GTMFECETCRNRYRKLENFENHKKFYCSELH). The interval 1022-1062 (WEQTPQIRKRRKMKSVGDDEELQQNESGTSPKSSEGLQFQN) is disordered. Phosphoserine is present on residues Ser1036, Ser1051, Ser1091, Ser1158, Ser1161, and Ser1180. The span at 1045 to 1062 (QNESGTSPKSSEGLQFQN) shows a compositional bias: polar residues. The disordered stretch occupies residues 1138–1169 (HTNSLSRPNSFDKPEPFERASPVSFQELNRTG). Polar residues predominate over residues 1160–1169 (VSFQELNRTG). 2 stretches are compositionally biased toward basic and acidic residues: residues 1202 to 1219 (LRGE…ERHV) and 1246 to 1259 (DLEA…KSEK). Disordered regions lie at residues 1202–1282 (LRGE…PKKK), 1384–1414 (RSKS…SRVG), and 1523–1548 (SHQS…VLSG). At Thr1268 the chain carries Phosphothreonine. 2 stretches are compositionally biased toward low complexity: residues 1394 to 1406 (TPPQ…ELQP) and 1523 to 1536 (SHQS…VSTQ). 4 positions are modified to phosphoserine: Ser1735, Ser1740, Ser1749, and Ser1753. The segment covering 1871-1883 (VRSSPAPSENTHI) has biased composition (polar residues). The disordered stretch occupies residues 1871-1911 (VRSSPAPSENTHISPLKCTDNNQERKSPGVKNQGDKVNIQE). Residues Ser1884 and Ser2033 each carry the phosphoserine modification. 2 C2H2-type zinc fingers span residues 2088-2110 (YICE…IRTH) and 2116-2140 (YHCT…SKAH). Disordered stretches follow at residues 2155–2228 (DEQD…PVST), 2265–2303 (SDYN…HQMS), 2327–2381 (SPSS…THLF), and 2572–2718 (PASQ…VIAT). Over residues 2164–2175 (EKQRFSYERSGY) the composition is skewed to basic and acidic residues. Residues 2176 to 2198 (DLEESDGPDEDDNENEDDDEDSQ) show a composition bias toward acidic residues. 2 stretches are compositionally biased toward polar residues: residues 2199 to 2226 (AESV…QDPV) and 2288 to 2300 (TIPS…SPCH). Ser2327 and Ser2599 each carry phosphoserine. Polar residues predominate over residues 2573 to 2608 (ASQSKACETQPKQTSVASANQVSRTESPQGLPTVQR). Residues 2623–2637 (DHARLDGLSKMDTEK) are compositionally biased toward basic and acidic residues. A compositionally biased stretch (polar residues) spans 2651-2663 (TSIQGQPASTSQP). A phosphoserine mark is found at Ser2669 and Ser2682.

Interacts with UTP4.

The protein resides in the nucleus. It localises to the cytoplasm. This protein specifically binds to the DNA sequence 5'-GGGACTTTCC-3' which is found in the enhancer elements of numerous viral promoters such as those of SV40, CMV, or HIV-1. In addition, related sequences are found in the enhancer elements of a number of cellular promoters, including those of the class I MHC, interleukin-2 receptor, and interferon-beta genes. It may act in T-cell activation. Involved in activating HIV-1 gene expression. Isoform 2 and isoform 3 also bind to the IPCS (IRF1 and p53 common sequence) DNA sequence in the promoter region of interferon regulatory factor 1 and p53 genes and are involved in transcription regulation of these genes. Isoform 2 does not activate HIV-1 gene expression. Isoform 2 and isoform 3 may be involved in apoptosis. This is Zinc finger protein 40 (HIVEP1) from Homo sapiens (Human).